Reading from the N-terminus, the 393-residue chain is Protein shisa-9B (393 aa).

The signal sequence occupies residues 1 to 20 (MKSTGLLLGYFLMKVLVCDA). The Extracellular segment spans residues 21–131 (EGEPGKSLDG…MDQHDPTKDK (111 aa)). Residues 28-52 (LDGAVTASGSNDSRDGENGLSETPH) are disordered. Residue Asn-38 is glycosylated (N-linked (GlcNAc...) asparagine). The helical transmembrane segment at 132–152 (TNLIVYIICGVVAIMALVGIF) threads the bilayer. Residues 153–393 (TKLGLEKAHR…VTNSKTEVTV (241 aa)) are Cytoplasmic-facing. Residues 307-340 (QKQNGHKSKSTKVHSSHPLAYGSNTIANPGRMSS) form a disordered region. Positions 310-321 (NGHKSKSTKVHS) are enriched in basic residues.

It belongs to the shisa family. SHISA9 subfamily. In terms of assembly, component of some AMPA receptors (ionotropic glutamate receptors) complex.

It localises to the cell projection. Its subcellular location is the dendritic spine membrane. The protein localises to the synapse. In terms of biological role, regulator of short-term neuronal synaptic plasticity in the dentate gyrus. Associates with AMPA receptors (ionotropic glutamate receptors) in synaptic spines and promotes AMPA receptor desensitization at excitatory synapses. The protein is Protein shisa-9B (shisa9b) of Danio rerio (Zebrafish).